The sequence spans 437 residues: Histidine--tRNA ligase (437 aa).

It belongs to the class-II aminoacyl-tRNA synthetase family. In terms of assembly, homodimer.

The protein resides in the cytoplasm. It carries out the reaction tRNA(His) + L-histidine + ATP = L-histidyl-tRNA(His) + AMP + diphosphate + H(+). This chain is Histidine--tRNA ligase, found in Leptospira biflexa serovar Patoc (strain Patoc 1 / Ames).